A 201-amino-acid chain; its full sequence is Recombination protein RecR (201 aa).

Residues 60–75 form a C4-type zinc finger; sequence CSVCGNVDTTDPCSIC. Positions 83 to 178 constitute a Toprim domain; it reads TTIIVVEDVA…KITRLAHGVP (96 aa).

It belongs to the RecR family.

In terms of biological role, may play a role in DNA repair. It seems to be involved in an RecBC-independent recombinational process of DNA repair. It may act with RecF and RecO. This chain is Recombination protein RecR, found in Bartonella quintana (strain Toulouse) (Rochalimaea quintana).